We begin with the raw amino-acid sequence, 46 residues long: GIFSKLAGKKLKNLLISGLKSVGKEVGMDVVRTGIDIAGCKIKGEC.

Cys-40 and Cys-46 are disulfide-bonded.

Expressed by the skin glands.

It is found in the secreted. Functionally, shows antibacterial activity against representative Gram-negative and Gram-positive bacterial species, and hemolytic activity. In Pelophylax ridibundus (Marsh frog), this protein is Esculentin-1R.